The chain runs to 157 residues: Cyclic pyranopterin monophosphate synthase (157 aa).

Residues 74–76 (MCH) and 111–112 (ME) contribute to the substrate site. D126 is an active-site residue.

The protein belongs to the MoaC family. In terms of assembly, homohexamer; trimer of dimers.

The enzyme catalyses (8S)-3',8-cyclo-7,8-dihydroguanosine 5'-triphosphate = cyclic pyranopterin phosphate + diphosphate. Its pathway is cofactor biosynthesis; molybdopterin biosynthesis. Its function is as follows. Catalyzes the conversion of (8S)-3',8-cyclo-7,8-dihydroguanosine 5'-triphosphate to cyclic pyranopterin monophosphate (cPMP). This Carboxydothermus hydrogenoformans (strain ATCC BAA-161 / DSM 6008 / Z-2901) protein is Cyclic pyranopterin monophosphate synthase.